Consider the following 396-residue polypeptide: 1-deoxy-D-xylulose 5-phosphate reductoisomerase (396 aa).

The NADPH site is built by Thr-13, Gly-14, Ser-15, Ile-16, and Asn-127. Lys-128 contributes to the 1-deoxy-D-xylulose 5-phosphate binding site. An NADPH-binding site is contributed by Glu-129. Asp-153 is a binding site for Mn(2+). The 1-deoxy-D-xylulose 5-phosphate site is built by Ser-154, Glu-155, Ser-184, and His-207. Glu-155 provides a ligand contact to Mn(2+). Gly-213 lines the NADPH pocket. Residues Ser-220, Asn-225, Lys-226, and Glu-229 each contribute to the 1-deoxy-D-xylulose 5-phosphate site. Residue Glu-229 coordinates Mn(2+).

Belongs to the DXR family. Requires Mg(2+) as cofactor. Mn(2+) is required as a cofactor.

It catalyses the reaction 2-C-methyl-D-erythritol 4-phosphate + NADP(+) = 1-deoxy-D-xylulose 5-phosphate + NADPH + H(+). It participates in isoprenoid biosynthesis; isopentenyl diphosphate biosynthesis via DXP pathway; isopentenyl diphosphate from 1-deoxy-D-xylulose 5-phosphate: step 1/6. Catalyzes the NADPH-dependent rearrangement and reduction of 1-deoxy-D-xylulose-5-phosphate (DXP) to 2-C-methyl-D-erythritol 4-phosphate (MEP). In Pseudomonas aeruginosa (strain UCBPP-PA14), this protein is 1-deoxy-D-xylulose 5-phosphate reductoisomerase.